A 288-amino-acid chain; its full sequence is ATP synthase gamma chain (288 aa).

The protein belongs to the ATPase gamma chain family. As to quaternary structure, F-type ATPases have 2 components, CF(1) - the catalytic core - and CF(0) - the membrane proton channel. CF(1) has five subunits: alpha(3), beta(3), gamma(1), delta(1), epsilon(1). CF(0) has three main subunits: a, b and c.

Its subcellular location is the cell inner membrane. In terms of biological role, produces ATP from ADP in the presence of a proton gradient across the membrane. The gamma chain is believed to be important in regulating ATPase activity and the flow of protons through the CF(0) complex. The chain is ATP synthase gamma chain from Vesicomyosocius okutanii subsp. Calyptogena okutanii (strain HA).